The primary structure comprises 162 residues: Large ribosomal subunit protein uL10 (162 aa).

This sequence belongs to the universal ribosomal protein uL10 family. As to quaternary structure, part of the ribosomal stalk of the 50S ribosomal subunit. The N-terminus interacts with L11 and the large rRNA to form the base of the stalk. The C-terminus forms an elongated spine to which L12 dimers bind in a sequential fashion forming a multimeric L10(L12)X complex.

Forms part of the ribosomal stalk, playing a central role in the interaction of the ribosome with GTP-bound translation factors. The sequence is that of Large ribosomal subunit protein uL10 from Borreliella afzelii (strain PKo) (Borrelia afzelii).